A 245-amino-acid chain; its full sequence is MIIPALDLIDGNVVRLHQGDYGQQRDYGNDPLLRLQDYQQQGAQVLHLVDLTGAKDPTARQIPLLRKLLAGVNVPVQVGGGIRNEQDVAALLEAGATRVVIGSTAVKQPQLVQGWFERYGADAMVLALDVRIDADGTKRVAISGWQENSDATLEQVVEQFLPYGLKHVLCTDISRDGTLAGSNVALYQEISQRYPQIAFQASGGIGNLDDIAQLRGSGVEGVIVGRALLEGKFSVEEAIACWQNG.

The Proton acceptor role is filled by D7. D129 serves as the catalytic Proton donor.

This sequence belongs to the HisA/HisF family.

The protein resides in the cytoplasm. It catalyses the reaction 1-(5-phospho-beta-D-ribosyl)-5-[(5-phospho-beta-D-ribosylamino)methylideneamino]imidazole-4-carboxamide = 5-[(5-phospho-1-deoxy-D-ribulos-1-ylimino)methylamino]-1-(5-phospho-beta-D-ribosyl)imidazole-4-carboxamide. The protein operates within amino-acid biosynthesis; L-histidine biosynthesis; L-histidine from 5-phospho-alpha-D-ribose 1-diphosphate: step 4/9. This chain is 1-(5-phosphoribosyl)-5-[(5-phosphoribosylamino)methylideneamino] imidazole-4-carboxamide isomerase, found in Serratia proteamaculans (strain 568).